The following is a 153-amino-acid chain: Large ribosomal subunit protein bL9 (153 aa).

Belongs to the bacterial ribosomal protein bL9 family.

Binds to the 23S rRNA. This Tropheryma whipplei (strain Twist) (Whipple's bacillus) protein is Large ribosomal subunit protein bL9.